The following is a 436-amino-acid chain: GTPase Der (436 aa).

2 EngA-type G domains span residues 4-167 (PTVA…PTEV) and 175-351 (IRFS…ESQN). GTP-binding positions include 10–17 (GRPNVGKS), 57–61 (DTGGI), 119–122 (NKVD), 181–188 (GRPNVGKS), 229–233 (DTAGM), and 294–297 (NKWD). The KH-like domain maps to 352-436 (RRISSAVLND…PIHLIARKRK (85 aa)).

Belongs to the TRAFAC class TrmE-Era-EngA-EngB-Septin-like GTPase superfamily. EngA (Der) GTPase family. In terms of assembly, associates with the 50S ribosomal subunit.

Functionally, GTPase that plays an essential role in the late steps of ribosome biogenesis. The sequence is that of GTPase Der from Streptococcus thermophilus (strain CNRZ 1066).